The following is a 508-amino-acid chain: Phytepsin (508 aa).

The signal sequence occupies residues 1 to 27 (MGTRGLALALLAAVLLLQTVLPAASEA). Residues 28 to 66 (EGLVRIALKKRPIDRNSRVATGLSGGEEQPLLSGANPLR) constitute a propeptide, activation peptide. Positions 84 to 505 (YFGEIGVGTP…DYGKLRIGFA (422 aa)) constitute a Peptidase A1 domain. Asp102 is an active-site residue. Disulfide bonds link Cys115-Cys121 and Cys280-Cys284. Asp289 is an active-site residue. The 106-residue stretch at 314 to 419 (VVSQECKTIV…NQLCNRLPSP (106 aa)) folds into the Saposin B-type domain. Cystine bridges form between Cys319–Cys413, Cys344–Cys385, Cys350–Cys382, and Cys427–Cys464. Asn399 carries N-linked (GlcNAc...) asparagine glycosylation.

This sequence belongs to the peptidase A1 family. In terms of assembly, heterodimer of two subunits (29 kDa and 11 kDa) processed from the precursor molecule. A large enzyme (32 kDa and 16 kDa) is an intermediate precursor form. As to expression, embryo and leaf.

It localises to the vacuole. It carries out the reaction Prefers hydrophobic residues Phe, Val, Ile, Leu, and Ala at P1 and P1', but also cleaves -Phe-|-Asp- and -Asp-|-Asp- bonds in 2S albumin from plant seeds.. Functionally, involved in the breakdown of propeptides of storage proteins in protein-storage vacuoles. The sequence is that of Phytepsin from Hordeum vulgare (Barley).